We begin with the raw amino-acid sequence, 893 residues long: UPF0182 protein CLD_0809 (893 aa).

7 consecutive transmembrane segments (helical) span residues 9–29 (IPLFIIILFIAFFNKIINFII), 49–69 (AIIILMIPIFIIFFISIWMYY), 94–114 (LFFIFNFIVSIFLAYIFSSSY), 154–174 (VIISLLLFLVITTFIAYFILE), 202–222 (LAIVSGLIILFISFGHLIKIW), 246–266 (FYKIIVVITLISSIVTLLSIV), and 273–293 (VSICIGITIFLIVSQNIASFL).

It belongs to the UPF0182 family.

It is found in the cell membrane. The chain is UPF0182 protein CLD_0809 from Clostridium botulinum (strain Okra / Type B1).